We begin with the raw amino-acid sequence, 217 residues long: Redox-sensing transcriptional repressor Rex (217 aa).

The segment at residues 18–57 (LYYRFLKNLHASGKQRVSSAELSDAVKVDSATIRRDFSYF) is a DNA-binding region (H-T-H motif). 92 to 97 (GVGNLG) provides a ligand contact to NAD(+).

The protein belongs to the transcriptional regulatory Rex family. In terms of assembly, homodimer.

It localises to the cytoplasm. Functionally, modulates transcription in response to changes in cellular NADH/NAD(+) redox state. The sequence is that of Redox-sensing transcriptional repressor Rex from Bacillus pumilus (strain SAFR-032).